Consider the following 434-residue polypeptide: Flagellum-specific ATP synthase (434 aa).

Residue 164–171 (AGSGVGKS) participates in ATP binding.

The protein belongs to the ATPase alpha/beta chains family.

The protein localises to the cytoplasm. It carries out the reaction ATP + H2O + 4 H(+)(in) = ADP + phosphate + 5 H(+)(out). Probable catalytic subunit of a protein translocase for flagellum-specific export, or a proton translocase involved in local circuits at the flagellum. The polypeptide is Flagellum-specific ATP synthase (fliI) (Helicobacter pylori (strain J99 / ATCC 700824) (Campylobacter pylori J99)).